A 700-amino-acid polypeptide reads, in one-letter code: Centrosomal protein of 63 kDa (700 aa).

N-acetylmethionine is present on M1. 2 coiled-coil regions span residues 73 to 283 (KEVG…ETFI) and 343 to 533 (LQAE…MCKK). A phosphoserine mark is found at S278, K488, and L492. The disordered stretch occupies residues 570–603 (QYKTGHHSPRGQTLDSIDPVARGPSPLSSHISPG). The segment covering 593-603 (PSPLSSHISPG) has biased composition (low complexity).

The protein belongs to the CEP63 family. As to quaternary structure, interacts with CEP152 and CDK1; these interactions recruit both ligands to centrosomes. Interacts with CDK2, CDK5RAP2, WDR62, CEP90, KIAA0753/moonraker and CCDC14. CEP63, CDK5RAP2, CEP152, WDR62 are proposed to form a stepwise assembled complex at the centrosome forming a ring near parental centrioles. Interacts with CCDC57; the interaction is required for their location to proximal end of centrioles. Interacts with FXR1; promoting its stabilization. Polyubiquitinated via 'Lys-48'-linked ubiquitin, leading to its degradation. Deubiquitinated by USP36, promoting its stabilization.

It is found in the cytoplasm. The protein localises to the cytoskeleton. Its subcellular location is the microtubule organizing center. The protein resides in the centrosome. It localises to the centriole. It is found in the centriolar satellite. Functionally, required for normal spindle assembly. Plays a key role in mother-centriole-dependent centriole duplication; the function also seems to involve CEP152, CDK5RAP2 and WDR62 through a stepwise assembled complex at the centrosome that recruits CDK2 required for centriole duplication. Reported to be required for centrosomal recruitment of CEP152; however, this function has been questioned. Also recruits CDK1 to centrosomes. Plays a role in DNA damage response. Following DNA damage, such as double-strand breaks (DSBs), is removed from centrosomes; this leads to the inactivation of spindle assembly and delay in mitotic progression. Promotes stabilization of FXR1 protein by inhibiting FXR1 ubiquitination. In Mus musculus (Mouse), this protein is Centrosomal protein of 63 kDa.